The primary structure comprises 189 residues: Translation initiation factor IF-3 (189 aa).

This sequence belongs to the IF-3 family. As to quaternary structure, monomer.

The protein resides in the cytoplasm. Functionally, IF-3 binds to the 30S ribosomal subunit and shifts the equilibrium between 70S ribosomes and their 50S and 30S subunits in favor of the free subunits, thus enhancing the availability of 30S subunits on which protein synthesis initiation begins. The polypeptide is Translation initiation factor IF-3 (Corynebacterium glutamicum (strain ATCC 13032 / DSM 20300 / JCM 1318 / BCRC 11384 / CCUG 27702 / LMG 3730 / NBRC 12168 / NCIMB 10025 / NRRL B-2784 / 534)).